The primary structure comprises 205 residues: Methylthioribulose-1-phosphate dehydratase (205 aa).

Cys-75 is a binding site for substrate. His-93 and His-95 together coordinate Zn(2+). Glu-116 serves as the catalytic Proton donor/acceptor. Zn(2+) is bound at residue His-171.

The protein belongs to the aldolase class II family. MtnB subfamily. Zn(2+) is required as a cofactor.

It localises to the cytoplasm. It carries out the reaction 5-(methylsulfanyl)-D-ribulose 1-phosphate = 5-methylsulfanyl-2,3-dioxopentyl phosphate + H2O. It functions in the pathway amino-acid biosynthesis; L-methionine biosynthesis via salvage pathway; L-methionine from S-methyl-5-thio-alpha-D-ribose 1-phosphate: step 2/6. In terms of biological role, catalyzes the dehydration of methylthioribulose-1-phosphate (MTRu-1-P) into 2,3-diketo-5-methylthiopentyl-1-phosphate (DK-MTP-1-P). The sequence is that of Methylthioribulose-1-phosphate dehydratase from Kluyveromyces lactis (strain ATCC 8585 / CBS 2359 / DSM 70799 / NBRC 1267 / NRRL Y-1140 / WM37) (Yeast).